The chain runs to 460 residues: tRNA(Ile)-lysidine synthase (460 aa).

30 to 35 (SGGLDS) is a binding site for ATP.

The protein belongs to the tRNA(Ile)-lysidine synthase family.

It is found in the cytoplasm. It carries out the reaction cytidine(34) in tRNA(Ile2) + L-lysine + ATP = lysidine(34) in tRNA(Ile2) + AMP + diphosphate + H(+). In terms of biological role, ligates lysine onto the cytidine present at position 34 of the AUA codon-specific tRNA(Ile) that contains the anticodon CAU, in an ATP-dependent manner. Cytidine is converted to lysidine, thus changing the amino acid specificity of the tRNA from methionine to isoleucine. This Yersinia pestis protein is tRNA(Ile)-lysidine synthase.